Reading from the N-terminus, the 133-residue chain is ATP synthase epsilon chain (133 aa).

This sequence belongs to the ATPase epsilon chain family. As to quaternary structure, F-type ATPases have 2 components, CF(1) - the catalytic core - and CF(0) - the membrane proton channel. CF(1) has five subunits: alpha(3), beta(3), gamma(1), delta(1), epsilon(1). CF(0) has three main subunits: a, b and c.

The protein resides in the cell membrane. Functionally, produces ATP from ADP in the presence of a proton gradient across the membrane. This is ATP synthase epsilon chain (atpC) from Mycoplasma genitalium (strain ATCC 33530 / DSM 19775 / NCTC 10195 / G37) (Mycoplasmoides genitalium).